A 486-amino-acid chain; its full sequence is Zinc metalloproteinase-disintegrin VMP-II (486 aa).

Residues 1–20 (MIQVLLVTICLAVFPYQGSS) form the signal peptide. Residues 21 to 190 (IILESGNVND…KASQSNLPPE (170 aa)) constitute a propeptide that is removed on maturation. Position 191 is a pyrrolidone carboxylic acid (glutamine 191). Residues 197-394 (RYIELVVVAD…HYTTCLYNEP (198 aa)) enclose the Peptidase M12B domain. Residues glutamate 200 and aspartate 284 each coordinate Ca(2+). 3 disulfides stabilise this stretch: cysteine 308–cysteine 389, cysteine 348–cysteine 372, and cysteine 350–cysteine 355. Histidine 333 provides a ligand contact to Zn(2+). Residue glutamate 334 is part of the active site. 2 residues coordinate Zn(2+): histidine 337 and histidine 343. Cysteine 389 and asparagine 392 together coordinate Ca(2+). Positions 402–486 (PPVCGNYYTE…AECPNKGYYG (85 aa)) constitute a Disintegrin domain. 7 disulfides stabilise this stretch: cysteine 405/cysteine 424, cysteine 416/cysteine 434, cysteine 418/cysteine 429, cysteine 428/cysteine 451, cysteine 442/cysteine 448, cysteine 447/cysteine 472, and cysteine 460/cysteine 479. Residues 464–466 (RGD) carry the Cell attachment site motif.

It belongs to the venom metalloproteinase (M12B) family. P-II subfamily. P-IIb sub-subfamily. In terms of assembly, monomer. Zn(2+) serves as cofactor. As to expression, expressed by the venom gland.

It localises to the secreted. In terms of biological role, snake venom zinc metalloproteinase that inhibits ADP-induced platelet aggregation (probably by binding integrin alpha-IIb/beta-3 (ITGA2B/ITGB3)) and degrades fibrinogen. The protein is Zinc metalloproteinase-disintegrin VMP-II of Crotalus atrox (Western diamondback rattlesnake).